We begin with the raw amino-acid sequence, 418 residues long: tRNA(Met) cytidine acetate ligase (418 aa).

Gly95, Asn161, and Arg186 together coordinate ATP.

This sequence belongs to the TmcAL family.

It is found in the cytoplasm. It catalyses the reaction cytidine(34) in elongator tRNA(Met) + acetate + ATP = N(4)-acetylcytidine(34) in elongator tRNA(Met) + AMP + diphosphate. Its function is as follows. Catalyzes the formation of N(4)-acetylcytidine (ac(4)C) at the wobble position of elongator tRNA(Met), using acetate and ATP as substrates. First activates an acetate ion to form acetyladenylate (Ac-AMP) and then transfers the acetyl group to tRNA to form ac(4)C34. This Thermotoga maritima (strain ATCC 43589 / DSM 3109 / JCM 10099 / NBRC 100826 / MSB8) protein is tRNA(Met) cytidine acetate ligase.